Reading from the N-terminus, the 810-residue chain is Probable inorganic carbon transporter subunit DabA (810 aa).

Zn(2+) contacts are provided by cysteine 347, aspartate 349, histidine 509, and cysteine 524.

This sequence belongs to the inorganic carbon transporter (TC 9.A.2) DabA family. In terms of assembly, forms a complex with DabB. The cofactor is Zn(2+).

Its subcellular location is the cell inner membrane. In terms of biological role, part of an energy-coupled inorganic carbon pump. The chain is Probable inorganic carbon transporter subunit DabA from Marinomonas sp. (strain MWYL1).